A 240-amino-acid chain; its full sequence is DNA repair protein RecO (240 aa).

The protein belongs to the RecO family.

Its function is as follows. Involved in DNA repair and RecF pathway recombination. This chain is DNA repair protein RecO, found in Wolbachia sp. subsp. Drosophila simulans (strain wRi).